Reading from the N-terminus, the 341-residue chain is Tetraacyldisaccharide 4'-kinase (341 aa).

Residue 54–61 (TVGGAGKT) participates in ATP binding.

Belongs to the LpxK family.

It catalyses the reaction a lipid A disaccharide + ATP = a lipid IVA + ADP + H(+). Its pathway is glycolipid biosynthesis; lipid IV(A) biosynthesis; lipid IV(A) from (3R)-3-hydroxytetradecanoyl-[acyl-carrier-protein] and UDP-N-acetyl-alpha-D-glucosamine: step 6/6. Functionally, transfers the gamma-phosphate of ATP to the 4'-position of a tetraacyldisaccharide 1-phosphate intermediate (termed DS-1-P) to form tetraacyldisaccharide 1,4'-bis-phosphate (lipid IVA). This Brucella melitensis biotype 2 (strain ATCC 23457) protein is Tetraacyldisaccharide 4'-kinase.